The chain runs to 137 residues: Prefoldin subunit alpha (137 aa).

It belongs to the prefoldin subunit alpha family. As to quaternary structure, heterohexamer of two alpha and four beta subunits.

It localises to the cytoplasm. In terms of biological role, molecular chaperone capable of stabilizing a range of proteins. Seems to fulfill an ATP-independent, HSP70-like function in archaeal de novo protein folding. This is Prefoldin subunit alpha (pfdA) from Archaeoglobus fulgidus (strain ATCC 49558 / DSM 4304 / JCM 9628 / NBRC 100126 / VC-16).